A 1088-amino-acid chain; its full sequence is RNA-directed RNA polymerase (1088 aa).

Positions 501–687 (LSYGDVTRFL…AKRYIAGGKI (187 aa)) constitute a RdRp catalytic domain.

Belongs to the reoviridae RNA-directed RNA polymerase family. As to quaternary structure, interacts with VP3 (Potential). Interacts with VP2; this interaction activates VP1. Interacts with NSP5; this interaction is probably necessary for the formation of functional virus factories. Interacts with NSP2; this interaction is weak. Mg(2+) is required as a cofactor.

It is found in the virion. The enzyme catalyses RNA(n) + a ribonucleoside 5'-triphosphate = RNA(n+1) + diphosphate. Functionally, RNA-directed RNA polymerase that is involved in both transcription and genome replication. Together with VP3 capping enzyme, forms an enzyme complex positioned near the channels situated at each of the five-fold vertices of the core. Following infection, the outermost layer of the virus is lost, leaving a double-layered particle (DLP) made up of the core and VP6 shell. VP1 then catalyzes the transcription of fully conservative plus-strand genomic RNAs that are extruded through the DLP's channels into the cytoplasm where they function as mRNAs for translation of viral proteins. One copy of each of the viral (+)RNAs is also recruited during core assembly, together with newly synthesized polymerase complexes and VP2. The polymerase of these novo-formed particles catalyzes the synthesis of complementary minus-strands leading to dsRNA formation. To do so, the polymerase specifically recognizes and binds 4 bases 5'-UGUG-3' in the conserved 3'-sequence of plus-strand RNA templates. VP2 presumably activates the autoinhibited VP1-RNA complex to coordinate packaging and genome replication. Once dsRNA synthesis is complete, the polymerase switches to the transcriptional mode, thus providing secondary transcription. In Homo sapiens (Human), this protein is RNA-directed RNA polymerase.